The following is a 177-amino-acid chain: Large ribosomal subunit protein uL6 (177 aa).

It belongs to the universal ribosomal protein uL6 family. Part of the 50S ribosomal subunit.

This protein binds to the 23S rRNA, and is important in its secondary structure. It is located near the subunit interface in the base of the L7/L12 stalk, and near the tRNA binding site of the peptidyltransferase center. This chain is Large ribosomal subunit protein uL6, found in Pseudomonas putida (strain W619).